The sequence spans 586 residues: ATPase family AAA domain-containing protein 3A (586 aa).

2 disordered regions span residues 1 to 55 and 111 to 134; these read MSWL…PTGL and QAEE…QYQD. At Ser2 the chain carries N-acetylserine. Residues 2–50 are required for interaction with the inner surface of the mitochondrial outer membrane; that stretch reads SWLFGINKGPKGEGAGPPPPLPPAQPGAEGGGDRGLGDRPAPKDKWSNF. The Mitochondrial intermembrane segment spans residues 2–246; that stretch reads SWLFGINKGP…FRAFVTDWDK (245 aa). Positions 17-26 are enriched in pro residues; sequence GPPPPLPPAQ. Composition is skewed to basic and acidic residues over residues 32–48 and 111–125; these read GGDR…DKWS and QAEE…ETRQ. Positions 86-219 form a coiled coil; the sequence is QLEQQSKLKE…QIRLKAAEHR (134 aa). Residues 247–264 traverse the membrane as a helical segment; sequence VTATVAGLTLLAVGVYSA. The Mitochondrial matrix segment spans residues 265 to 586; it reads KNATLVAGRF…PGRGDEPSPS (322 aa). Residues 290-305 are S100B-binding; it reads RITVLEALRHPIQVSR. Phosphoserine is present on Ser321. Residue 352–359 coordinates ATP; sequence GPPGTGKT. Lys491 is subject to N6-acetyllysine.

Belongs to the AAA ATPase family. As to quaternary structure, can form homooligomers. Homodimer formation at the N-terminus may be regulated by ATP and is required for the interaction with the inner surface of the mitochondrial outer membrane and correct mitochondrial homeostasis. Interacts with components of the mitochondrial ribosome and with other proteins involved in mitochondrial RNA metabolism. May also interact with protein involved in lipid metabolism, including STARD9. May interact with FAM210A. Interacts with GADD45GIP1. Interacts with S100B in a Ca(+2)- and Zn(+2)-dependent manner; this interaction probably occurs in the cytosol prior to mitochondrial targeting. S100B could assist ATAD3A cytoplasmic processing, preventing aggregation and favoring mitochondrial localization. Interacts with HSP60/HSPD1. Forms heterooligomers with ATAD3B; this interaction may affect ATAD3A activity. Interacts with CLPB. Interacts with EIF2AK3/PERK; ATAD3A and EIF2S1/eIF-2-alpha occupy a common binding site within the cytoplasmic loop of EIF2AK3/PERK, leading to prevent EIF2AK3/PERK association with its substrate EIF2S1/eIF-2-alpha. Overexpressed in lung adenocarcinomas (at protein level).

The protein resides in the mitochondrion inner membrane. The protein localises to the mitochondrion matrix. It is found in the mitochondrion nucleoid. It carries out the reaction ATP + H2O = ADP + phosphate + H(+). In terms of biological role, essential for mitochondrial network organization, mitochondrial metabolism and cell growth at organism and cellular level. May play an important role in mitochondrial protein synthesis. May also participate in mitochondrial DNA replication. May bind to mitochondrial DNA D-loops and contribute to nucleoid stability. Required for enhanced channeling of cholesterol for hormone-dependent steroidogenesis. Involved in mitochondrial-mediated antiviral innate immunity. Required to protect mitochondria from the PERK-mediated unfolded protein response: specifically inhibits the activity of EIF2AK3/PERK at mitochondria-endoplasmic reticulum contact sites, thereby providing a safe haven for mitochondrial protein translation during endoplasmic reticulum stress. Ability to inhibit EIF2AK3/PERK is independent of its ATPase activity. Also involved in the mitochondrial DNA damage response by promoting signaling between damaged genomes and the mitochondrial membrane, leading to activation of the integrated stress response (ISR). The sequence is that of ATPase family AAA domain-containing protein 3A from Homo sapiens (Human).